Reading from the N-terminus, the 258-residue chain is Pimeloyl-[acyl-carrier protein] methyl ester esterase (258 aa).

An AB hydrolase-1 domain is found at L16–H241. Substrate is bound by residues W22, S82 to M83, and F143 to Q147. The active-site Nucleophile is S82. Residues D207 and H235 contribute to the active site. H235 provides a ligand contact to substrate.

The protein belongs to the AB hydrolase superfamily. Carboxylesterase BioH family. Monomer.

The protein resides in the cytoplasm. It carries out the reaction 6-carboxyhexanoyl-[ACP] methyl ester + H2O = 6-carboxyhexanoyl-[ACP] + methanol + H(+). It participates in cofactor biosynthesis; biotin biosynthesis. Functionally, the physiological role of BioH is to remove the methyl group introduced by BioC when the pimeloyl moiety is complete. It allows to synthesize pimeloyl-ACP via the fatty acid synthetic pathway through the hydrolysis of the ester bonds of pimeloyl-ACP esters. In Yersinia enterocolitica serotype O:8 / biotype 1B (strain NCTC 13174 / 8081), this protein is Pimeloyl-[acyl-carrier protein] methyl ester esterase.